Reading from the N-terminus, the 301-residue chain is 4-hydroxy-tetrahydrodipicolinate synthase (301 aa).

A pyruvate-binding site is contributed by threonine 46. Residue tyrosine 134 is the Proton donor/acceptor of the active site. Lysine 162 serves as the catalytic Schiff-base intermediate with substrate. A pyruvate-binding site is contributed by isoleucine 203.

Belongs to the DapA family. In terms of assembly, homotetramer; dimer of dimers.

It localises to the cytoplasm. The enzyme catalyses L-aspartate 4-semialdehyde + pyruvate = (2S,4S)-4-hydroxy-2,3,4,5-tetrahydrodipicolinate + H2O + H(+). The protein operates within amino-acid biosynthesis; L-lysine biosynthesis via DAP pathway; (S)-tetrahydrodipicolinate from L-aspartate: step 3/4. Catalyzes the condensation of (S)-aspartate-beta-semialdehyde [(S)-ASA] and pyruvate to 4-hydroxy-tetrahydrodipicolinate (HTPA). The sequence is that of 4-hydroxy-tetrahydrodipicolinate synthase from Anaplasma marginale (strain St. Maries).